The sequence spans 793 residues: Probable exo-1,4-beta-xylosidase xlnD (793 aa).

The N-terminal stretch at 1–20 (MPRVASVAAVLAALLPSALG) is a signal peptide. Residues Asn-23, Asn-87, and Asn-142 are each glycosylated (N-linked (GlcNAc...) asparagine). Asp-310 is a catalytic residue. Residues Asn-326, Asn-385, Asn-404, Asn-440, Asn-477, Asn-518, Asn-559, Asn-614, Asn-652, Asn-679, and Asn-701 are each glycosylated (N-linked (GlcNAc...) asparagine).

The protein belongs to the glycosyl hydrolase 3 family.

The protein localises to the secreted. The catalysed reaction is Hydrolysis of (1-&gt;4)-beta-D-xylans, to remove successive D-xylose residues from the non-reducing termini.. It functions in the pathway glycan degradation; xylan degradation. In terms of biological role, xylan 1,4-beta-xylosidase involved in the hydrolysis of xylan, a major structural heterogeneous polysaccharide found in plant biomass representing the second most abundant polysaccharide in the biosphere, after cellulose. The chain is Probable exo-1,4-beta-xylosidase xlnD (xlnD) from Aspergillus terreus (strain NIH 2624 / FGSC A1156).